Consider the following 559-residue polypeptide: Protein QNR-71 (559 aa).

The N-terminal stretch at 1–22 (MSQAHRHLALLLPAEAVLCAAA) is a signal peptide. The Extracellular portion of the chain corresponds to 23 to 487 (MRFQDVLSNG…NGGSSSGTTK (465 aa)). Asn-92, Asn-133, Asn-145, Asn-149, Asn-192, Asn-199, Asn-248, Asn-274, Asn-307, and Asn-311 each carry an N-linked (GlcNAc...) asparagine glycan. Residues 239–326 (VSMSQKHDRN…IIPVPCKPVT (88 aa)) form the PKD domain. Residues 329 to 356 (PSLPTPAVTTDASSNSDPSAPNEMAEDN) are disordered. Residues 335-347 (AVTTDASSNSDPS) show a composition bias toward polar residues. N-linked (GlcNAc...) asparagine glycosylation occurs at Asn-459. The helical transmembrane segment at 488-508 (GVFIFLGLLAVFGAIGAFVLY) threads the bilayer. Residues 509–559 (KRYKQYKPIERSAGQAENQEGLSAYVSNFKAFFFPKSTERNPLLKSKPGIV) are Cytoplasmic-facing.

This sequence belongs to the PMEL/NMB family. Melanocyte-specific, restricted to the pigmented layer of the retina and the epidermis.

It localises to the membrane. Functionally, could be involved in melanogenesis. This Coturnix japonica (Japanese quail) protein is Protein QNR-71 (QNR-71).